Consider the following 1530-residue polypeptide: DNA-directed RNA polymerase III subunit RPC1 (1530 aa).

Positions 74, 77, 84, 87, 114, 117, and 161 each coordinate Zn(2+). 3 residues coordinate Mg(2+): Asp503, Asp505, and Asp507. The segment at 846-858 is bridging helix; the sequence is PTEFFFHTMAGRE. Over residues 992–1001 the composition is skewed to basic and acidic residues; that stretch reads EEQESREDAL. 2 disordered regions span residues 992–1016 and 1057–1099; these read EEQESREDALHNSNGKTNDRESRPR and NLLN…SKEG.

Belongs to the RNA polymerase beta' chain family. In terms of assembly, component of the RNA polymerase III (Pol III) complex consisting of 17 subunits.

It localises to the nucleus. The catalysed reaction is RNA(n) + a ribonucleoside 5'-triphosphate = RNA(n+1) + diphosphate. Functionally, DNA-dependent RNA polymerase catalyzes the transcription of DNA into RNA using the four ribonucleoside triphosphates as substrates. Largest and catalytic core component of RNA polymerase III which synthesizes small RNAs, such as 5S rRNA and tRNAs. Forms the polymerase active center together with the second largest subunit. A single-stranded DNA template strand of the promoter is positioned within the central active site cleft of Pol III. A bridging helix emanates from RPC1 and crosses the cleft near the catalytic site and is thought to promote translocation of Pol III by acting as a ratchet that moves the RNA-DNA hybrid through the active site by switching from straight to bent conformations at each step of nucleotide addition. This is DNA-directed RNA polymerase III subunit RPC1 from Trypanosoma brucei brucei.